Here is a 120-residue protein sequence, read N- to C-terminus: NAD(P)H-quinone oxidoreductase subunit 3, chloroplastic (120 aa).

The next 3 helical transmembrane spans lie at Tyr-9–Ser-29, Met-64–Met-84, and Leu-89–Val-109.

It belongs to the complex I subunit 3 family. NDH is composed of at least 16 different subunits, 5 of which are encoded in the nucleus.

It is found in the plastid. Its subcellular location is the chloroplast thylakoid membrane. It catalyses the reaction a plastoquinone + NADH + (n+1) H(+)(in) = a plastoquinol + NAD(+) + n H(+)(out). The enzyme catalyses a plastoquinone + NADPH + (n+1) H(+)(in) = a plastoquinol + NADP(+) + n H(+)(out). NDH shuttles electrons from NAD(P)H:plastoquinone, via FMN and iron-sulfur (Fe-S) centers, to quinones in the photosynthetic chain and possibly in a chloroplast respiratory chain. The immediate electron acceptor for the enzyme in this species is believed to be plastoquinone. Couples the redox reaction to proton translocation, and thus conserves the redox energy in a proton gradient. The sequence is that of NAD(P)H-quinone oxidoreductase subunit 3, chloroplastic from Huperzia lucidula (Shining clubmoss).